The primary structure comprises 325 residues: DNA-directed RNA polymerase subunit alpha (325 aa).

Residues 1-231 (MQNSLLKPRI…DQLNVFAALE (231 aa)) form an alpha N-terminal domain (alpha-NTD) region. The alpha C-terminal domain (alpha-CTD) stretch occupies residues 246-325 (VDPILLRPVD…ENWPPAGLEK (80 aa)).

It belongs to the RNA polymerase alpha chain family. In terms of assembly, homodimer. The RNAP catalytic core consists of 2 alpha, 1 beta, 1 beta' and 1 omega subunit. When a sigma factor is associated with the core the holoenzyme is formed, which can initiate transcription.

The catalysed reaction is RNA(n) + a ribonucleoside 5'-triphosphate = RNA(n+1) + diphosphate. In terms of biological role, DNA-dependent RNA polymerase catalyzes the transcription of DNA into RNA using the four ribonucleoside triphosphates as substrates. The sequence is that of DNA-directed RNA polymerase subunit alpha from Janthinobacterium sp. (strain Marseille) (Minibacterium massiliensis).